The primary structure comprises 785 residues: Arrestin domain-containing protein D (785 aa).

Disordered regions lie at residues 29-69 (QNES…SKYP), 172-205 (ILLP…TTTT), 326-367 (SNNS…ITNN), 435-486 (SNSN…SDHN), and 608-642 (YSSS…LDEQ). The span at 173–205 (LLPTTTSTQNSTLSPTLLSSNLNSKSSTTTTTT) shows a compositional bias: low complexity. The span at 435-450 (SNSNSSSSGGSSNKNN) shows a compositional bias: low complexity. Over residues 466 to 478 (SNKKSSGSHRYHY) the composition is skewed to basic residues. Residues 608–633 (YSSSGSGSGSGSSNSNSNHSSSNYLN) are compositionally biased toward low complexity. Residues 682–742 (ESSITNCNLC…ICLMCFDAVK (61 aa)) form an FYVE-type zinc finger. Cys-688, Cys-691, Cys-704, Cys-707, Cys-712, Cys-715, Cys-734, and Cys-737 together coordinate Zn(2+). An RING-type; degenerate zinc finger spans residues 688 to 738 (CNLCDNTFTIIRRTHHCRACGGVFCEACSNQKVCLYGFGVNNKVRICLMCF).

This sequence belongs to the arrestin family.

In Dictyostelium discoideum (Social amoeba), this protein is Arrestin domain-containing protein D (adcD).